The following is a 348-amino-acid chain: Flagellar P-ring protein (348 aa).

The first 16 residues, 1–16 (MRIFLLCLALSLSVFA), serve as a signal peptide directing secretion.

This sequence belongs to the FlgI family. As to quaternary structure, the basal body constitutes a major portion of the flagellar organelle and consists of four rings (L,P,S, and M) mounted on a central rod.

It is found in the periplasm. The protein resides in the bacterial flagellum basal body. Functionally, assembles around the rod to form the L-ring and probably protects the motor/basal body from shearing forces during rotation. The sequence is that of Flagellar P-ring protein from Campylobacter lari (strain RM2100 / D67 / ATCC BAA-1060).